The chain runs to 65 residues: Large ribosomal subunit protein bL35 (65 aa).

It belongs to the bacterial ribosomal protein bL35 family.

In Prochlorococcus marinus subsp. pastoris (strain CCMP1986 / NIES-2087 / MED4), this protein is Large ribosomal subunit protein bL35.